Reading from the N-terminus, the 434-residue chain is Histidinol dehydrogenase (434 aa).

Positions 130, 192, and 215 each coordinate NAD(+). Residues S238, Q260, and H263 each contribute to the substrate site. Zn(2+) contacts are provided by Q260 and H263. Active-site proton acceptor residues include E328 and H329. 4 residues coordinate substrate: H329, D362, E416, and H421. D362 is a binding site for Zn(2+). Zn(2+) is bound at residue H421.

This sequence belongs to the histidinol dehydrogenase family. Zn(2+) serves as cofactor.

It carries out the reaction L-histidinol + 2 NAD(+) + H2O = L-histidine + 2 NADH + 3 H(+). It functions in the pathway amino-acid biosynthesis; L-histidine biosynthesis; L-histidine from 5-phospho-alpha-D-ribose 1-diphosphate: step 9/9. In terms of biological role, catalyzes the sequential NAD-dependent oxidations of L-histidinol to L-histidinaldehyde and then to L-histidine. The chain is Histidinol dehydrogenase from Synechococcus sp. (strain ATCC 27144 / PCC 6301 / SAUG 1402/1) (Anacystis nidulans).